An 86-amino-acid chain; its full sequence is Small ribosomal subunit protein uS17 (86 aa).

The protein belongs to the universal ribosomal protein uS17 family. In terms of assembly, part of the 30S ribosomal subunit.

In terms of biological role, one of the primary rRNA binding proteins, it binds specifically to the 5'-end of 16S ribosomal RNA. This chain is Small ribosomal subunit protein uS17, found in Streptococcus thermophilus (strain CNRZ 1066).